Reading from the N-terminus, the 274-residue chain is Hydroxyethylthiazole kinase (274 aa).

Met-46 provides a ligand contact to substrate. Arg-122 and Thr-173 together coordinate ATP. Position 200 (Gly-200) interacts with substrate.

This sequence belongs to the Thz kinase family. The cofactor is Mg(2+).

The enzyme catalyses 5-(2-hydroxyethyl)-4-methylthiazole + ATP = 4-methyl-5-(2-phosphooxyethyl)-thiazole + ADP + H(+). Its pathway is cofactor biosynthesis; thiamine diphosphate biosynthesis; 4-methyl-5-(2-phosphoethyl)-thiazole from 5-(2-hydroxyethyl)-4-methylthiazole: step 1/1. Catalyzes the phosphorylation of the hydroxyl group of 4-methyl-5-beta-hydroxyethylthiazole (THZ). This is Hydroxyethylthiazole kinase from Clostridium tetani (strain Massachusetts / E88).